The sequence spans 250 residues: Cytochrome c oxidase subunit 2 (250 aa).

Residues 1–39 (MFFLINKLVMNFDAPSPWGIYFQDSATPQMEGLNELHDN) are Mitochondrial intermembrane-facing. A helical transmembrane segment spans residues 40 to 60 (IMYYLVVILFAVGWILLSIVI). At 61 to 81 (NYVSTKSPISHKYLNHGTLIE) the chain is on the mitochondrial matrix side. The chain crosses the membrane as a helical span at residues 82–104 (LIWTITPAVILILIAFPSFKLLY). Topologically, residues 105–250 (LMDEVSDPSM…EKFLIWLKEQ (146 aa)) are mitochondrial intermembrane. Residues His185, Cys220, Glu222, Cys224, His228, and Met231 each contribute to the Cu cation site. Glu222 contributes to the Mg(2+) binding site.

This sequence belongs to the cytochrome c oxidase subunit 2 family. As to quaternary structure, component of the cytochrome c oxidase (complex IV, CIV), a multisubunit enzyme composed of a catalytic core of 3 subunits and several supernumerary subunits. The complex exists as a monomer or a dimer and forms supercomplexes (SCs) in the inner mitochondrial membrane with ubiquinol-cytochrome c oxidoreductase (cytochrome b-c1 complex, complex III, CIII). Cu cation is required as a cofactor.

It is found in the mitochondrion inner membrane. The catalysed reaction is 4 Fe(II)-[cytochrome c] + O2 + 8 H(+)(in) = 4 Fe(III)-[cytochrome c] + 2 H2O + 4 H(+)(out). Its function is as follows. Component of the cytochrome c oxidase, the last enzyme in the mitochondrial electron transport chain which drives oxidative phosphorylation. The respiratory chain contains 3 multisubunit complexes succinate dehydrogenase (complex II, CII), ubiquinol-cytochrome c oxidoreductase (cytochrome b-c1 complex, complex III, CIII) and cytochrome c oxidase (complex IV, CIV), that cooperate to transfer electrons derived from NADH and succinate to molecular oxygen, creating an electrochemical gradient over the inner membrane that drives transmembrane transport and the ATP synthase. Cytochrome c oxidase is the component of the respiratory chain that catalyzes the reduction of oxygen to water. Electrons originating from reduced cytochrome c in the intermembrane space (IMS) are transferred via the dinuclear copper A center (CU(A)) of subunit 2 and heme A of subunit 1 to the active site in subunit 1, a binuclear center (BNC) formed by heme A3 and copper B (CU(B)). The BNC reduces molecular oxygen to 2 water molecules using 4 electrons from cytochrome c in the IMS and 4 protons from the mitochondrial matrix. The chain is Cytochrome c oxidase subunit 2 (COII) from Podospora anserina (strain S / ATCC MYA-4624 / DSM 980 / FGSC 10383) (Pleurage anserina).